The following is a 321-amino-acid chain: Phospho-N-acetylmuramoyl-pentapeptide-transferase (321 aa).

10 helical membrane passes run 1–21, 50–70, 76–96, 112–132, 140–160, 176–196, 200–220, 225–245, 250–270, and 300–320; these read MIFV…PVLI, MGGL…IIFV, IILL…DDYI, FLAQ…FHLV, IPFT…IVFW, GLAT…SFVL, AIGI…PYNI, VFMG…ISIM, LSLI…MLQV, and VVTV…WIGV.

This sequence belongs to the glycosyltransferase 4 family. MraY subfamily. Mg(2+) serves as cofactor.

It is found in the cell membrane. It carries out the reaction UDP-N-acetyl-alpha-D-muramoyl-L-alanyl-gamma-D-glutamyl-L-lysyl-D-alanyl-D-alanine + di-trans,octa-cis-undecaprenyl phosphate = Mur2Ac(oyl-L-Ala-gamma-D-Glu-L-Lys-D-Ala-D-Ala)-di-trans,octa-cis-undecaprenyl diphosphate + UMP. It participates in cell wall biogenesis; peptidoglycan biosynthesis. Functionally, catalyzes the initial step of the lipid cycle reactions in the biosynthesis of the cell wall peptidoglycan: transfers peptidoglycan precursor phospho-MurNAc-pentapeptide from UDP-MurNAc-pentapeptide onto the lipid carrier undecaprenyl phosphate, yielding undecaprenyl-pyrophosphoryl-MurNAc-pentapeptide, known as lipid I. The protein is Phospho-N-acetylmuramoyl-pentapeptide-transferase of Staphylococcus aureus (strain Mu50 / ATCC 700699).